Reading from the N-terminus, the 130-residue chain is Aspartate 1-decarboxylase (130 aa).

The active-site Schiff-base intermediate with substrate; via pyruvic acid is serine 25. Residue serine 25 is modified to Pyruvic acid (Ser). Residue threonine 57 participates in substrate binding. Catalysis depends on tyrosine 58, which acts as the Proton donor. 73–75 provides a ligand contact to substrate; that stretch reads GAA.

This sequence belongs to the PanD family. In terms of assembly, heterooctamer of four alpha and four beta subunits. It depends on pyruvate as a cofactor. Is synthesized initially as an inactive proenzyme, which is activated by self-cleavage at a specific serine bond to produce a beta-subunit with a hydroxyl group at its C-terminus and an alpha-subunit with a pyruvoyl group at its N-terminus.

Its subcellular location is the cytoplasm. The catalysed reaction is L-aspartate + H(+) = beta-alanine + CO2. It functions in the pathway cofactor biosynthesis; (R)-pantothenate biosynthesis; beta-alanine from L-aspartate: step 1/1. Its function is as follows. Catalyzes the pyruvoyl-dependent decarboxylation of aspartate to produce beta-alanine. The chain is Aspartate 1-decarboxylase from Myxococcus xanthus (strain DK1622).